We begin with the raw amino-acid sequence, 179 residues long: Large ribosomal subunit protein uL10 (179 aa).

It belongs to the universal ribosomal protein uL10 family. As to quaternary structure, part of the ribosomal stalk of the 50S ribosomal subunit. The N-terminus interacts with L11 and the large rRNA to form the base of the stalk. The C-terminus forms an elongated spine to which L12 dimers bind in a sequential fashion forming a multimeric L10(L12)X complex.

Its function is as follows. Forms part of the ribosomal stalk, playing a central role in the interaction of the ribosome with GTP-bound translation factors. The protein is Large ribosomal subunit protein uL10 of Symbiobacterium thermophilum (strain DSM 24528 / JCM 14929 / IAM 14863 / T).